Reading from the N-terminus, the 626-residue chain is MLDPTYPLFPTFAFLGFVLALVPLPWHLQAWNSGTCFFMVWTALGCLNQFVNSIVWKDNAINSAPIWCEISIRITMGLSVGLPASSLCIIRRLYHIAKVRAVSHTRAEKMRVIIIDALICVLFPLVYIAMQYIVQGHRFNILENVGCYPAVFNTPVTYVVSYIWPVLIGMVSATYSVLALIEFNRHRLQFSQFLHSNSTLSVSRYLRLMALAMTEMCCTVPLGIFVIVLNCTSTPIEPWVSLKATHYWYSRVDQYPAVVWRSSHLVVVCNELTRWLAPVSAMLFFAYFGFAQEARRNYAAAWAWACRALGLPERIATLPTTKSKGPGFAEKFAAKAKGLSSFNVKDFTSEFSSKAHDFTSKAKQYTLPRPMPQTPSSSGFSSSESTRFGSSVDGKELPSPTTKEFSSPIPIHLSGMQTLVSFDSNKDLPSPPAYDVEAQYGPYNIDNRVSYHIADAGVRASYPMGVAYSSDSEHRRINPHATFTSANNDTDEPTSPALPDTPSSCSSSATFSTLQSRDFIVLPSTTDVTRDTGSLPIRRSPAGPPRLPSLSQLFGISSMRAEGRDVEAQVQDVATGTAAPTTTAPAPASTTIAPATTTATAPTTTANIQRGEPDVPTSPRTHRASV.

Helical transmembrane passes span 8–28, 36–56, 70–90, 113–133, 163–183, 208–228, and 271–291; these read LFPT…PWHL, CFFM…SIVW, ISIR…LCII, IIID…MQYI, IWPV…LIEF, LMAL…FVIV, and ELTR…FGFA. Disordered stretches follow at residues 363-409, 481-509, 524-549, and 571-626; these read KQYT…SSPI, ATFT…SSSA, STTD…RLPS, and QDVA…RASV. Residues 376–391 show a composition bias toward low complexity; sequence SSSGFSSSESTRFGSS. Positions 574–606 are enriched in low complexity; that stretch reads ATGTAAPTTTAPAPASTTIAPATTTATAPTTTA.

This sequence belongs to the G-protein coupled receptor 4 family.

It localises to the membrane. Its function is as follows. Receptor for the BAP3 pheromone, a prenylated mating factor. The polypeptide is Pheromone B alpha 3 receptor (BAR3) (Schizophyllum commune (strain H4-8 / FGSC 9210) (Split gill fungus)).